We begin with the raw amino-acid sequence, 283 residues long: Glutamate racemase (283 aa).

Substrate is bound by residues 28 to 29 and 60 to 61; these read DS and YG. C92 functions as the Proton donor/acceptor in the catalytic mechanism. 93-94 serves as a coordination point for substrate; sequence NT. C204 (proton donor/acceptor) is an active-site residue. Position 205–206 (205–206) interacts with substrate; that stretch reads TH.

Belongs to the aspartate/glutamate racemases family.

The enzyme catalyses L-glutamate = D-glutamate. The protein operates within cell wall biogenesis; peptidoglycan biosynthesis. Its function is as follows. Provides the (R)-glutamate required for cell wall biosynthesis. This chain is Glutamate racemase, found in Klebsiella pneumoniae (strain 342).